The chain runs to 232 residues: CD302 antigen (232 aa).

The first 22 residues, 1–22 (MPRAAPPALLLPLLGLAAAAAA), serve as a signal peptide directing secretion. Over 23 to 168 (DCPSSTWVQF…YEKKYLSDNR (146 aa)) the chain is Extracellular. Positions 32–152 (FQDSCYIFLQ…CEVSSVEGTL (121 aa)) constitute a C-type lectin domain. N-linked (GlcNAc...) asparagine glycosylation occurs at Asn-109. A disulfide bond links Cys-128 and Cys-143. A helical membrane pass occupies residues 169–189 (ILISALVIASTVILTVLGAVV). At 190-232 (WFLYKRSLDSGFTTVFSAAHQSPYNDDCVLVVAEENEYDIQFN) the chain is on the cytoplasmic side.

It is found in the membrane. It localises to the cell projection. The protein localises to the filopodium. The protein resides in the cytoplasm. Its subcellular location is the cell cortex. It is found in the microvillus. Potential multifunctional C-type lectin receptor that may play roles in endocytosis and phagocytosis as well as in cell adhesion and migration. This is CD302 antigen from Bos taurus (Bovine).